We begin with the raw amino-acid sequence, 338 residues long: MTKIAVLGAGSWGTALANTAAENGHDVRLWTHHSDQAVEINHNKTNTKYLPDATLSEQLFATDDMAVAVKDSDIVLCVVPTKAVREVAKQLADTLAQLNHQVILAHATKGLEQGTYKRISEMLSEEIPETYRSALVVVSGPSHAEDVIKHDLTAVSIGGSDENATKLLQRVLSNKTFRAYTNHDLLGSELFAALKNIVAIGSGALVGLGYGANAQAALLTRSLVEMRQLGLAMGAQEKTLYELAGIGDLIVTGMSPNSRNYRAGLGLGQGKSLKQVSDDMGMVIEGVNTTKAVYDFSQQYHVDMPITKAIYQVLYDNKPLSEAINDLMSRPLKSEDAL.

Residues Ser11, Trp12, His32, His33, and Lys109 each contribute to the NADPH site. Lys109, Gly140, and Ser142 together coordinate sn-glycerol 3-phosphate. Ala144 is an NADPH binding site. Residues Lys195, Asp248, Ser258, Arg259, and Asn260 each coordinate sn-glycerol 3-phosphate. Residue Lys195 is the Proton acceptor of the active site. Arg259 is an NADPH binding site. Residues Val283 and Glu285 each coordinate NADPH.

Belongs to the NAD-dependent glycerol-3-phosphate dehydrogenase family.

Its subcellular location is the cytoplasm. It catalyses the reaction sn-glycerol 3-phosphate + NAD(+) = dihydroxyacetone phosphate + NADH + H(+). The enzyme catalyses sn-glycerol 3-phosphate + NADP(+) = dihydroxyacetone phosphate + NADPH + H(+). The protein operates within membrane lipid metabolism; glycerophospholipid metabolism. In terms of biological role, catalyzes the reduction of the glycolytic intermediate dihydroxyacetone phosphate (DHAP) to sn-glycerol 3-phosphate (G3P), the key precursor for phospholipid synthesis. This Leuconostoc citreum (strain KM20) protein is Glycerol-3-phosphate dehydrogenase [NAD(P)+].